The following is a 428-amino-acid chain: MMADKTSPMITSDHSISNFSTGLFGPHPTVPPDVGVVTSSQSQMKDLFGLFCMVTLNLIALLANTGVMVAIARAPHLKKFAFVCHLCAVDVLCAILLMPLGIISSSPFFGTVVFTILECQVYIFLNVFLIWLSILTITAISVERYFYIVHPMRYEVKMTINLVIGVMLLIWFKSLLLALVTLFGWPPYGHQSSIAASHCSLHASHSRLRGVFAVLFCVICFLAPVVVIFSVYSAVYKVARSAALQQVPAVPTWADASPAKDRSDSINSQTTIITTRTLPQRLSPERAFSGGKAALTLAFIVGQFLVCWLPFFIFHLQMSLTGSMKSPGDLEEAVNWLAYSSFAVNPSFYGLLNRQIRDELVKFRRCCVTQPVEIGPSSLEGSFQENFLQFIQRTSSSSETHPSFANSNPRNMENQAHKIPGQIPEEQA.

The Extracellular segment spans residues 1–46 (MMADKTSPMITSDHSISNFSTGLFGPHPTVPPDVGVVTSSQSQMKD). An N-linked (GlcNAc...) asparagine glycan is attached at asparagine 18. The helical transmembrane segment at 47 to 67 (LFGLFCMVTLNLIALLANTGV) threads the bilayer. Over 68 to 93 (MVAIARAPHLKKFAFVCHLCAVDVLC) the chain is Cytoplasmic. The helical transmembrane segment at 94–114 (AILLMPLGIISSSPFFGTVVF) threads the bilayer. The Extracellular portion of the chain corresponds to 115–120 (TILECQ). Residues 121–141 (VYIFLNVFLIWLSILTITAIS) traverse the membrane as a helical segment. Residues 142 to 162 (VERYFYIVHPMRYEVKMTINL) are Cytoplasmic-facing. A helical membrane pass occupies residues 163-183 (VIGVMLLIWFKSLLLALVTLF). Topologically, residues 184-210 (GWPPYGHQSSIAASHCSLHASHSRLRG) are extracellular. The chain crosses the membrane as a helical span at residues 211–231 (VFAVLFCVICFLAPVVVIFSV). Residues 232-293 (YSAVYKVARS…PERAFSGGKA (62 aa)) lie on the Cytoplasmic side of the membrane. The helical transmembrane segment at 294 to 314 (ALTLAFIVGQFLVCWLPFFIF) threads the bilayer. Residues 315 to 428 (HLQMSLTGSM…IPGQIPEEQA (114 aa)) are Extracellular-facing. Polar residues predominate over residues 398–414 (SETHPSFANSNPRNMEN). The segment at 398–428 (SETHPSFANSNPRNMENQAHKIPGQIPEEQA) is disordered.

Belongs to the G-protein coupled receptor 1 family.

The protein resides in the cell membrane. This Oryzias latipes (Japanese rice fish) protein is Probable G-protein coupled receptor.